Reading from the N-terminus, the 174-residue chain is Austinoid biosynthesis clusters protein H (174 aa).

The protein belongs to the trt14 isomerase family. In terms of assembly, homodimer.

Its pathway is secondary metabolite biosynthesis; terpenoid biosynthesis. Part of the gene cluster B that mediates the biosynthesis of austinol and dehydroaustinol, two fungal meroterpenoids. The first step of the pathway is the synthesis of 3,5-dimethylorsellinic acid by the polyketide synthase ausA. 3,5-dimethylorsellinic acid is then prenylated by the polyprenyl transferase ausN. Further epoxidation by the FAD-dependent monooxygenase ausM and cyclization by the probable terpene cyclase ausL lead to the formation of protoaustinoid A. Protoaustinoid A is then oxidized to spiro-lactone preaustinoid A3 by the combined action of the FAD-binding monooxygenases ausB and ausC, and the dioxygenase ausE. Acid-catalyzed keto-rearrangement and ring contraction of the tetraketide portion of preaustinoid A3 by ausJ lead to the formation of preaustinoid A4. The aldo-keto reductase ausK, with the help of ausH, is involved in the next step by transforming preaustinoid A4 into isoaustinone which is in turn hydroxylated by the P450 monooxygenase ausI to form austinolide. Finally, the cytochrome P450 monooxygenase ausG modifies austinolide to austinol. Austinol can be further modified to dehydroaustinol which forms a diffusible complex with diorcinol that initiates conidiation. Due to genetic rearrangements of the clusters and the subsequent loss of some enzymes, the end products of the Emericella nidulans austinoid biosynthesis clusters are austinol and dehydroaustinol, even if additional enzymes, such as the O-acetyltransferase ausQ and the cytochrome P450 monooxygenase ausR are still functional. This Emericella nidulans (strain FGSC A4 / ATCC 38163 / CBS 112.46 / NRRL 194 / M139) (Aspergillus nidulans) protein is Austinoid biosynthesis clusters protein H.